The sequence spans 179 residues: Ribosome maturation factor RimP (179 aa).

This sequence belongs to the RimP family.

It is found in the cytoplasm. In terms of biological role, required for maturation of 30S ribosomal subunits. The protein is Ribosome maturation factor RimP of Chlorobium chlorochromatii (strain CaD3).